The primary structure comprises 785 residues: Endonuclease MutS2 (785 aa).

Gly335–Thr342 is a binding site for ATP. The Smr domain occupies Leu710–Lys785.

Belongs to the DNA mismatch repair MutS family. MutS2 subfamily. Homodimer. Binds to stalled ribosomes, contacting rRNA.

Its function is as follows. Endonuclease that is involved in the suppression of homologous recombination and thus may have a key role in the control of bacterial genetic diversity. In terms of biological role, acts as a ribosome collision sensor, splitting the ribosome into its 2 subunits. Detects stalled/collided 70S ribosomes which it binds and splits by an ATP-hydrolysis driven conformational change. Acts upstream of the ribosome quality control system (RQC), a ribosome-associated complex that mediates the extraction of incompletely synthesized nascent chains from stalled ribosomes and their subsequent degradation. Probably generates substrates for RQC. This is Endonuclease MutS2 from Listeria monocytogenes serotype 4a (strain HCC23).